A 280-amino-acid chain; its full sequence is Nocamycin O-methyltransferase (280 aa).

It belongs to the methyltransferase superfamily.

It catalyses the reaction nocamycin E + S-adenosyl-L-methionine = nocamycin I + S-adenosyl-L-homocysteine. It participates in antibiotic biosynthesis. Its function is as follows. Involved in the biosynthesis of nocamycin I and nocamycin II. Catalyzes the methylation of nocamycin E to yield nocamycin I. In Saccharothrix syringae (Nocardiopsis syringae), this protein is Nocamycin O-methyltransferase.